The following is a 162-amino-acid chain: Regulator of ribonuclease activity A (162 aa).

This sequence belongs to the RraA family. As to quaternary structure, homotrimer. Binds to both RNA-binding sites in the C-terminal region of Rne and to RhlB.

Its subcellular location is the cytoplasm. Functionally, globally modulates RNA abundance by binding to RNase E (Rne) and regulating its endonucleolytic activity. Can modulate Rne action in a substrate-dependent manner by altering the composition of the degradosome. Modulates RNA-binding and helicase activities of the degradosome. The sequence is that of Regulator of ribonuclease activity A from Haemophilus influenzae (strain 86-028NP).